The following is an 854-amino-acid chain: Probable disease resistance protein At1g51480 (854 aa).

The stretch at 25–62 forms a coiled coil; that stretch reads RNYIHKMEANLDDLHTTMEELKNGRDDLLRRVSIEEDK. In terms of domain architecture, NB-ARC spans 138–441; the sequence is AHKIPVPKVE…CEGYINPNRY (304 aa). Position 180–187 (180–187) interacts with ATP; sequence GMGGVGKT. LRR repeat units follow at residues 514-535, 536-557, 560-582, 584-605, 607-629, and 631-652; these read IVRQVSLISTQIEKISCSSKCS, NLSTLLLPYNKLVNISVGFFLF, KLVVLDLSTNMSLIELPEEISNL, SLQYLNLSSTGIKSLPGGMKKL, KLIYLNLEFSYKLESLVGISATL, and NLQVLKLFYSNVCVDDILMEEL.

It belongs to the disease resistance NB-LRR family.

Its function is as follows. Probable disease resistance protein. This chain is Probable disease resistance protein At1g51480, found in Arabidopsis thaliana (Mouse-ear cress).